Here is a 101-residue protein sequence, read N- to C-terminus: NADH-quinone oxidoreductase subunit K (101 aa).

3 consecutive transmembrane segments (helical) span residues 4 to 24, 30 to 50, and 62 to 82; these read LGHL…GIFL, IVLL…FIAF, and FVFF…AILV.

The protein belongs to the complex I subunit 4L family. NDH-1 is composed of 14 different subunits. Subunits NuoA, H, J, K, L, M, N constitute the membrane sector of the complex.

It localises to the cell inner membrane. The catalysed reaction is a quinone + NADH + 5 H(+)(in) = a quinol + NAD(+) + 4 H(+)(out). In terms of biological role, NDH-1 shuttles electrons from NADH, via FMN and iron-sulfur (Fe-S) centers, to quinones in the respiratory chain. The immediate electron acceptor for the enzyme in this species is believed to be ubiquinone. Couples the redox reaction to proton translocation (for every two electrons transferred, four hydrogen ions are translocated across the cytoplasmic membrane), and thus conserves the redox energy in a proton gradient. The chain is NADH-quinone oxidoreductase subunit K from Xanthomonas axonopodis pv. citri (strain 306).